We begin with the raw amino-acid sequence, 84 residues long: Small ribosomal subunit protein uS17 (84 aa).

The protein belongs to the universal ribosomal protein uS17 family. Part of the 30S ribosomal subunit.

One of the primary rRNA binding proteins, it binds specifically to the 5'-end of 16S ribosomal RNA. This Clostridium perfringens (strain ATCC 13124 / DSM 756 / JCM 1290 / NCIMB 6125 / NCTC 8237 / Type A) protein is Small ribosomal subunit protein uS17.